A 282-amino-acid chain; its full sequence is Probable endonuclease 4 (282 aa).

Positions 66, 106, 143, 177, 180, 214, 227, 229, and 259 each coordinate Zn(2+).

The protein belongs to the AP endonuclease 2 family. It depends on Zn(2+) as a cofactor.

It catalyses the reaction Endonucleolytic cleavage to 5'-phosphooligonucleotide end-products.. Endonuclease IV plays a role in DNA repair. It cleaves phosphodiester bonds at apurinic or apyrimidinic (AP) sites, generating a 3'-hydroxyl group and a 5'-terminal sugar phosphate. This Nitratidesulfovibrio vulgaris (strain DP4) (Desulfovibrio vulgaris) protein is Probable endonuclease 4.